The chain runs to 321 residues: Type 3 secretion system translocon protein SctB (321 aa).

The chain crosses the membrane as a helical span at residues A99–I119.

Belongs to the SctB/EspB family. In terms of assembly, the core secretion machinery of the T3SS is composed of approximately 20 different proteins, including cytoplasmic components, a base, an export apparatus and a needle. This subunit is involved in the formation of a pore, called the translocon, in host membrane.

It localises to the secreted. It is found in the cell surface. The protein resides in the host membrane. In terms of biological role, component of the type III secretion system (T3SS), also called injectisome, which is used to inject bacterial effector proteins into eukaryotic host cells. EspD and EspB are inserted into the host membrane where they form a pore and allow the translocation of effector proteins into the cytosol of target cells. Necessary for intimate attachment to epithelial cells. The protein is Type 3 secretion system translocon protein SctB of Escherichia coli O127:H6 (strain E2348/69 / EPEC).